We begin with the raw amino-acid sequence, 160 residues long: Putative 4-hydroxy-4-methyl-2-oxoglutarate aldolase (160 aa).

Substrate-binding positions include 75–78 and Arg-97; that span reads GDLI. Asp-98 lines the a divalent metal cation pocket.

The protein belongs to the class II aldolase/RraA-like family. Homotrimer. Requires a divalent metal cation as cofactor.

The catalysed reaction is 4-hydroxy-4-methyl-2-oxoglutarate = 2 pyruvate. It catalyses the reaction oxaloacetate + H(+) = pyruvate + CO2. Its function is as follows. Catalyzes the aldol cleavage of 4-hydroxy-4-methyl-2-oxoglutarate (HMG) into 2 molecules of pyruvate. Also contains a secondary oxaloacetate (OAA) decarboxylase activity due to the common pyruvate enolate transition state formed following C-C bond cleavage in the retro-aldol and decarboxylation reactions. The chain is Putative 4-hydroxy-4-methyl-2-oxoglutarate aldolase from Rhodospirillum centenum (strain ATCC 51521 / SW).